A 737-amino-acid chain; its full sequence is Polyribonucleotide nucleotidyltransferase (737 aa).

Positions 489 and 495 each coordinate Mg(2+). One can recognise a KH domain in the interval Pro-556–Ile-615. The 69-residue stretch at Asp-625–Lys-693 folds into the S1 motif domain. Residues Ser-691–Glu-737 are disordered. Basic and acidic residues predominate over residues Pro-700–Pro-714. The span at His-715–Lys-724 shows a compositional bias: basic residues. Positions Pro-725–Glu-737 are enriched in basic and acidic residues.

This sequence belongs to the polyribonucleotide nucleotidyltransferase family. Mg(2+) is required as a cofactor.

The protein localises to the cytoplasm. It carries out the reaction RNA(n+1) + phosphate = RNA(n) + a ribonucleoside 5'-diphosphate. In terms of biological role, involved in mRNA degradation. Catalyzes the phosphorolysis of single-stranded polyribonucleotides processively in the 3'- to 5'-direction. In Streptococcus pneumoniae (strain ATCC 700669 / Spain 23F-1), this protein is Polyribonucleotide nucleotidyltransferase.